Reading from the N-terminus, the 286-residue chain is Eukaryotic translation initiation factor 3 subunit F-2 (286 aa).

In terms of domain architecture, MPN spans 11-147 (ILLQPLVLLH…MRLYTAVVMG (137 aa)).

This sequence belongs to the eIF-3 subunit F family. Component of the eukaryotic translation initiation factor 3 (eIF-3) complex. The eIF-3 complex interacts with pix.

It localises to the cytoplasm. Its function is as follows. Component of the eukaryotic translation initiation factor 3 (eIF-3) complex, which is involved in protein synthesis of a specialized repertoire of mRNAs and, together with other initiation factors, stimulates binding of mRNA and methionyl-tRNAi to the 40S ribosome. The eIF-3 complex specifically targets and initiates translation of a subset of mRNAs involved in cell proliferation. The protein is Eukaryotic translation initiation factor 3 subunit F-2 of Drosophila willistoni (Fruit fly).